The chain runs to 371 residues: UDP-N-acetylglucosamine--N-acetylmuramyl-(pentapeptide) pyrophosphoryl-undecaprenol N-acetylglucosamine transferase (371 aa).

UDP-N-acetyl-alpha-D-glucosamine-binding positions include 15–17, Asn-126, Arg-172, Ser-199, Ile-256, 275–280, and Gln-301; these read TGG and ALTVSE.

This sequence belongs to the glycosyltransferase 28 family. MurG subfamily.

It localises to the cell inner membrane. It catalyses the reaction di-trans,octa-cis-undecaprenyl diphospho-N-acetyl-alpha-D-muramoyl-L-alanyl-D-glutamyl-meso-2,6-diaminopimeloyl-D-alanyl-D-alanine + UDP-N-acetyl-alpha-D-glucosamine = di-trans,octa-cis-undecaprenyl diphospho-[N-acetyl-alpha-D-glucosaminyl-(1-&gt;4)]-N-acetyl-alpha-D-muramoyl-L-alanyl-D-glutamyl-meso-2,6-diaminopimeloyl-D-alanyl-D-alanine + UDP + H(+). The protein operates within cell wall biogenesis; peptidoglycan biosynthesis. Functionally, cell wall formation. Catalyzes the transfer of a GlcNAc subunit on undecaprenyl-pyrophosphoryl-MurNAc-pentapeptide (lipid intermediate I) to form undecaprenyl-pyrophosphoryl-MurNAc-(pentapeptide)GlcNAc (lipid intermediate II). The polypeptide is UDP-N-acetylglucosamine--N-acetylmuramyl-(pentapeptide) pyrophosphoryl-undecaprenol N-acetylglucosamine transferase (Francisella philomiragia subsp. philomiragia (strain ATCC 25017 / CCUG 19701 / FSC 153 / O#319-036)).